A 102-amino-acid chain; its full sequence is ATP-dependent Clp protease adapter protein ClpS (102 aa).

Belongs to the ClpS family. As to quaternary structure, binds to the N-terminal domain of the chaperone ClpA.

In terms of biological role, involved in the modulation of the specificity of the ClpAP-mediated ATP-dependent protein degradation. The sequence is that of ATP-dependent Clp protease adapter protein ClpS from Shewanella pealeana (strain ATCC 700345 / ANG-SQ1).